Consider the following 452-residue polypeptide: Pup--protein ligase (452 aa).

A Mg(2+)-binding site is contributed by E9. R53 serves as a coordination point for ATP. Y55 is a binding site for Mg(2+). D57 acts as the Proton acceptor in catalysis. E63 lines the Mg(2+) pocket. Residues T66 and W419 each contribute to the ATP site.

The protein belongs to the Pup ligase/Pup deamidase family. Pup-conjugating enzyme subfamily.

The catalysed reaction is ATP + [prokaryotic ubiquitin-like protein]-L-glutamate + [protein]-L-lysine = ADP + phosphate + N(6)-([prokaryotic ubiquitin-like protein]-gamma-L-glutamyl)-[protein]-L-lysine.. Its pathway is protein degradation; proteasomal Pup-dependent pathway. The protein operates within protein modification; protein pupylation. Functionally, catalyzes the covalent attachment of the prokaryotic ubiquitin-like protein modifier Pup to the proteasomal substrate proteins, thereby targeting them for proteasomal degradation. This tagging system is termed pupylation. The ligation reaction involves the side-chain carboxylate of the C-terminal glutamate of Pup and the side-chain amino group of a substrate lysine. The protein is Pup--protein ligase of Parafrankia sp. (strain EAN1pec).